Here is a 426-residue protein sequence, read N- to C-terminus: 26S proteasome regulatory subunit 7 (426 aa).

209–216 is a binding site for ATP; it reads GPPGTGKT.

The protein belongs to the AAA ATPase family.

The protein resides in the cytoplasm. The protein localises to the nucleus. The 26S proteasome is involved in the ATP-dependent degradation of ubiquitinated proteins. The regulatory (or ATPase) complex confers ATP dependency and substrate specificity to the 26S complex. The protein is 26S proteasome regulatory subunit 7 (RPT1) of Spinacia oleracea (Spinach).